Consider the following 571-residue polypeptide: 15-cis-phytoene desaturase, chloroplastic/chromoplastic (571 aa).

The N-terminal 96 residues, 1–96 (MDTGCLSSMN…FRNSERPSKP (96 aa)), are a transit peptide targeting the chloroplast and chromoplast. FAD-binding positions include Ala107, 126 to 127 (EA), Lys134, 151 to 152 (HI), and Tyr157. Substrate is bound at residue Arg292. Residues Ile334 and Asp523 each contribute to the FAD site. Ala531 is a binding site for substrate. Met533 lines the FAD pocket.

This sequence belongs to the carotenoid/retinoid oxidoreductase family. Homotetramer. It depends on FAD as a cofactor.

It is found in the plastid. Its subcellular location is the chloroplast. The protein localises to the chromoplast. The protein resides in the membrane. The enzyme catalyses 2 a plastoquinone + 15-cis-phytoene = 9,9',15-tri-cis-zeta-carotene + 2 a plastoquinol. Its pathway is carotenoid biosynthesis; lycopene biosynthesis. Functionally, converts phytoene into zeta-carotene via the intermediary of phytofluene by the symmetrical introduction of two double bonds at the C-11 and C-11' positions of phytoene with a concomitant isomerization of two neighboring double bonds at the C9 and C9' positions from trans to cis. The protein is 15-cis-phytoene desaturase, chloroplastic/chromoplastic (PDS1) of Zea mays (Maize).